The following is a 361-amino-acid chain: Divinyl chlorophyll a/b light-harvesting protein PcbD (361 aa).

Transmembrane regions (helical) follow at residues phenylalanine 27–leucine 47, isoleucine 93–phenylalanine 113, phenylalanine 140–alanine 160, valine 201–valine 221, alanine 248–cysteine 268, and leucine 315–leucine 335.

Belongs to the PsbB/PsbC family. IsiA/Pcb subfamily. In terms of assembly, the antenna complex consists of divinyl chlorophylls (a and b) and divinyl chlorophyll a/b binding proteins and binds more divinyl chlorophyll b than does the antenna complex from high-light-adapted Prochlorococcus. Divinyl chlorophyll a is required as a cofactor. It depends on divinyl chlorophyll b as a cofactor.

The protein resides in the cellular thylakoid membrane. Its function is as follows. The antenna complex functions as a light receptor, it captures and delivers excitation energy to photosystems II and I. The Prochlorales pcb genes are not related to higher plant LHCs. This Prochlorococcus marinus (strain SARG / CCMP1375 / SS120) protein is Divinyl chlorophyll a/b light-harvesting protein PcbD (pcbD).